The following is a 360-amino-acid chain: Putative transport protein BU123 (360 aa).

Helical transmembrane passes span 18–38, 39–59, 66–86, 161–181, 204–224, 230–250, 251–271, 280–300, and 316–336; these read IFIV…ILGF, FWAS…QKIL, AVII…FFLV, GLFI…YWNG, LLLA…TALI, GIGL…IIFF, SCLI…WLYW, ILLI…PFFI, and IGGL…VLVI.

Belongs to the autoinducer-2 exporter (AI-2E) (TC 2.A.86) family.

It is found in the cell membrane. This Buchnera aphidicola subsp. Acyrthosiphon pisum (strain APS) (Acyrthosiphon pisum symbiotic bacterium) protein is Putative transport protein BU123.